The following is a 317-amino-acid chain: L-lactate dehydrogenase (317 aa).

Residues valine 16, aspartate 37, lysine 42, tyrosine 68, and 82–83 (GA) contribute to the NAD(+) site. Substrate is bound by residues glutamine 85 and arginine 91. NAD(+)-binding positions include threonine 104, 121–123 (ATN), and serine 146. 123-126 (NPVD) contributes to the substrate binding site. Residue 151 to 154 (DTAR) participates in substrate binding. Arginine 156 and histidine 171 together coordinate beta-D-fructose 1,6-bisphosphate. The active-site Proton acceptor is the histidine 178. Phosphotyrosine is present on tyrosine 222. Position 231 (threonine 231) interacts with substrate.

Belongs to the LDH/MDH superfamily. LDH family. As to quaternary structure, homotetramer.

It localises to the cytoplasm. It carries out the reaction (S)-lactate + NAD(+) = pyruvate + NADH + H(+). The protein operates within fermentation; pyruvate fermentation to lactate; (S)-lactate from pyruvate: step 1/1. Allosterically activated by fructose 1,6-bisphosphate (FBP). Its function is as follows. Catalyzes the conversion of lactate to pyruvate. This is L-lactate dehydrogenase from Corynebacterium efficiens (strain DSM 44549 / YS-314 / AJ 12310 / JCM 11189 / NBRC 100395).